A 228-amino-acid chain; its full sequence is Ribulose-phosphate 3-epimerase (228 aa).

Position 9 (S9) interacts with substrate. A divalent metal cation-binding residues include H34, D36, H68, and D177. Residue D36 is the Proton acceptor of the active site. Residues H68, 177 to 179, and 199 to 200 contribute to the substrate site; these read DGG and GS. Residue D177 is the Proton donor of the active site.

This sequence belongs to the ribulose-phosphate 3-epimerase family. It depends on a divalent metal cation as a cofactor.

The catalysed reaction is D-ribulose 5-phosphate = D-xylulose 5-phosphate. It participates in carbohydrate degradation. In terms of biological role, catalyzes the reversible epimerization of D-ribulose 5-phosphate to D-xylulose 5-phosphate. The chain is Ribulose-phosphate 3-epimerase from Buchnera aphidicola subsp. Schizaphis graminum (strain Sg).